A 375-amino-acid polypeptide reads, in one-letter code: Cyclic AMP receptor 2 (375 aa).

Over 1–10 the chain is Extracellular; the sequence is MTIMSDIIAQ. A helical membrane pass occupies residues 11 to 30; the sequence is RTILLIADFSSIIGCSLVLI. Topologically, residues 31–44 are cytoplasmic; that stretch reads GFWRLKLLRNHITK. The chain crosses the membrane as a helical span at residues 45–65; it reads IISLFCATSLFKDVISTIITL. Residues 66–82 are Extracellular-facing; it reads LYKPDQTESGFPCYLHA. A helical membrane pass occupies residues 83 to 108; that stretch reads IVITFGSLACWLWTLMLSFSIYNLIV. Over 109-119 the chain is Cytoplasmic; it reads RREPEPERFEK. Residues 120–138 traverse the membrane as a helical segment; sequence FYFCLCYGLPLISTIVMLS. Topologically, residues 139–161 are extracellular; sequence THIIQPVGGWCWIGDNYDGYRFG. The chain crosses the membrane as a helical span at residues 162-180; the sequence is LFYGPFFFIWGTSAILVGL. Topologically, residues 181 to 204 are cytoplasmic; it reads TSKYTYSVIRSSVSDNKDKHMTYQ. Ser192 carries the phosphoserine modification. Residues 205-223 traverse the membrane as a helical segment; that stretch reads FKLINYIVVFLVCWVFAIV. Topologically, residues 224–234 are extracellular; it reads NRILNGLNQFP. The chain crosses the membrane as a helical span at residues 235-259; it reads TVPNVLHTYFSVSHGFYASITFIYN. The Cytoplasmic portion of the chain corresponds to 260–375; the sequence is NPLMWRYFGA…NNINNKNDMI (116 aa). Residues Ser298 and Ser303 each carry the phosphoserine modification. The disordered stretch occupies residues 338-375; sequence PKENENQNHHHHHHHHHHHNHYNNNNNNNNINNKNDMI. Basic residues predominate over residues 346–358; the sequence is HHHHHHHHHHHNH. Residues 359–375 show a composition bias toward low complexity; it reads YNNNNNNNNINNKNDMI.

The protein belongs to the G-protein coupled receptor 5 family. In terms of processing, C-terminal Ser or Thr residues may be phosphorylated.

Its subcellular location is the membrane. Its function is as follows. Receptor for cAMP. Coordinates the aggregation of individual cells into a multicellular organism and regulates the expression of a large number of developmentally regulated genes. The activity of this receptor is mediated by G proteins. Plays a key role during tip formation and late development; involved in cAMP-directed patterning of pre stalk cells as they sort before and during tip formation. The polypeptide is Cyclic AMP receptor 2 (carB) (Dictyostelium discoideum (Social amoeba)).